The following is a 566-amino-acid chain: Oxygen-dependent choline dehydrogenase (566 aa).

Residue 7-36 coordinates FAD; the sequence is DYIICGAGSAGNVLATRLTEDPNVTVLLLE. A disordered region spans residues 180-203; sequence NGYQQEGFGPMDRTVTPKGRRAST. His-474 functions as the Proton acceptor in the catalytic mechanism.

It belongs to the GMC oxidoreductase family. It depends on FAD as a cofactor.

The catalysed reaction is choline + A = betaine aldehyde + AH2. It catalyses the reaction betaine aldehyde + NAD(+) + H2O = glycine betaine + NADH + 2 H(+). It participates in amine and polyamine biosynthesis; betaine biosynthesis via choline pathway; betaine aldehyde from choline (cytochrome c reductase route): step 1/1. Its function is as follows. Involved in the biosynthesis of the osmoprotectant glycine betaine. Catalyzes the oxidation of choline to betaine aldehyde and betaine aldehyde to glycine betaine at the same rate. This Burkholderia ambifaria (strain MC40-6) protein is Oxygen-dependent choline dehydrogenase.